The chain runs to 221 residues: Thiopurine S-methyltransferase (221 aa).

Residues Trp12, Leu47, Glu68, and Arg125 each coordinate S-adenosyl-L-methionine.

This sequence belongs to the class I-like SAM-binding methyltransferase superfamily. TPMT family.

The protein localises to the cytoplasm. The enzyme catalyses S-adenosyl-L-methionine + a thiopurine = S-adenosyl-L-homocysteine + a thiopurine S-methylether.. This is Thiopurine S-methyltransferase from Legionella pneumophila subsp. pneumophila (strain Philadelphia 1 / ATCC 33152 / DSM 7513).